We begin with the raw amino-acid sequence, 181 residues long: RNA pyrophosphohydrolase (181 aa).

The Nudix hydrolase domain maps to 6 to 149 (GFRPNVGIIL…KRRVYTRALQ (144 aa)). Positions 38–59 (GGIKAQETPEEALFRELEEEVG) match the Nudix box motif. Positions 159 to 181 (GLPRQPPVGRPRRSAPPRGCRRA) are disordered. Basic residues predominate over residues 168–181 (RPRRSAPPRGCRRA).

The protein belongs to the Nudix hydrolase family. RppH subfamily. A divalent metal cation serves as cofactor.

In terms of biological role, accelerates the degradation of transcripts by removing pyrophosphate from the 5'-end of triphosphorylated RNA, leading to a more labile monophosphorylated state that can stimulate subsequent ribonuclease cleavage. The polypeptide is RNA pyrophosphohydrolase (Alkalilimnicola ehrlichii (strain ATCC BAA-1101 / DSM 17681 / MLHE-1)).